Here is a 638-residue protein sequence, read N- to C-terminus: Chaperone protein DnaK (638 aa).

Thr-198 is subject to Phosphothreonine; by autocatalysis. The interval 599–638 (IYESQQAEGGAEGGPSGHHDDGIVDADYEEVKDDNTKKSA) is disordered. Over residues 621–630 (IVDADYEEVK) the composition is skewed to acidic residues.

Belongs to the heat shock protein 70 family.

In terms of biological role, acts as a chaperone. The sequence is that of Chaperone protein DnaK from Allorhizobium ampelinum (strain ATCC BAA-846 / DSM 112012 / S4) (Agrobacterium vitis (strain S4)).